The primary structure comprises 659 residues: L-type lectin-domain containing receptor kinase V.7 (659 aa).

Residues 1–25 form the signal peptide; it reads MSHKVLQIVLVLLLTLFSSTHNSNG. Positions 22–244 are legume-lectin like; the sequence is NSNGNFLMEE…GALYYVMQFS (223 aa). Residues 26 to 275 are Extracellular-facing; it reads NFLMEEAAAA…PKKSYDRTRR (250 aa). N-linked (GlcNAc...) asparagine glycosylation is found at Asn-45, Asn-64, Asn-110, and Asn-192. The chain crosses the membrane as a helical span at residues 276–296; that stretch reads ILAVCLTLAVFTALVASGIGF. Residues 297 to 659 lie on the Cytoplasmic side of the membrane; that stretch reads VFYVRHKKVK…LTNSFVSHGR (363 aa). A Protein kinase domain is found at 333 to 595; that stretch reads FKEKQLLGKG…GLLCAHHTEL (263 aa). ATP contacts are provided by residues 339–347 and Lys-362; that span reads LGKGGFGQV. Residue Asp-462 is the Proton acceptor of the active site.

It in the C-terminal section; belongs to the protein kinase superfamily. Ser/Thr protein kinase family. The protein in the N-terminal section; belongs to the leguminous lectin family.

It localises to the cell membrane. It catalyses the reaction L-seryl-[protein] + ATP = O-phospho-L-seryl-[protein] + ADP + H(+). The enzyme catalyses L-threonyl-[protein] + ATP = O-phospho-L-threonyl-[protein] + ADP + H(+). Involved in resistance response to the pathogenic oomycetes Phytophthora infestans and Phytophthora capsici and to the pathogenic bacteria Pseudomonas syringae. This is L-type lectin-domain containing receptor kinase V.7 from Arabidopsis thaliana (Mouse-ear cress).